We begin with the raw amino-acid sequence, 503 residues long: Aromatase 1 (503 aa).

Residue C437 participates in heme binding.

It belongs to the cytochrome P450 family. Heme is required as a cofactor.

It localises to the membrane. The enzyme catalyses testosterone + 3 reduced [NADPH--hemoprotein reductase] + 3 O2 = 17beta-estradiol + formate + 3 oxidized [NADPH--hemoprotein reductase] + 4 H2O + 4 H(+). It catalyses the reaction androst-4-ene-3,17-dione + 3 reduced [NADPH--hemoprotein reductase] + 3 O2 = estrone + formate + 3 oxidized [NADPH--hemoprotein reductase] + 4 H2O + 4 H(+). In terms of biological role, catalyzes the formation of aromatic C18 estrogens from C19 androgens. The sequence is that of Aromatase 1 (CYP19A1) from Sus scrofa (Pig).